We begin with the raw amino-acid sequence, 83 residues long: ATP synthase subunit c (83 aa).

Helical transmembrane passes span 10–30 (IAVA…FGLL) and 52–72 (MFIV…IALY).

Belongs to the ATPase C chain family. As to quaternary structure, F-type ATPases have 2 components, F(1) - the catalytic core - and F(0) - the membrane proton channel. F(1) has five subunits: alpha(3), beta(3), gamma(1), delta(1), epsilon(1). F(0) has three main subunits: a(1), b(2) and c(10-14). The alpha and beta chains form an alternating ring which encloses part of the gamma chain. F(1) is attached to F(0) by a central stalk formed by the gamma and epsilon chains, while a peripheral stalk is formed by the delta and b chains.

The protein resides in the cell inner membrane. Functionally, f(1)F(0) ATP synthase produces ATP from ADP in the presence of a proton or sodium gradient. F-type ATPases consist of two structural domains, F(1) containing the extramembraneous catalytic core and F(0) containing the membrane proton channel, linked together by a central stalk and a peripheral stalk. During catalysis, ATP synthesis in the catalytic domain of F(1) is coupled via a rotary mechanism of the central stalk subunits to proton translocation. Key component of the F(0) channel; it plays a direct role in translocation across the membrane. A homomeric c-ring of between 10-14 subunits forms the central stalk rotor element with the F(1) delta and epsilon subunits. The sequence is that of ATP synthase subunit c from Shewanella amazonensis (strain ATCC BAA-1098 / SB2B).